Here is a 447-residue protein sequence, read N- to C-terminus: Phosphoglucosamine mutase (447 aa).

Ser106 serves as the catalytic Phosphoserine intermediate. Mg(2+)-binding residues include Ser106, Asp245, Asp247, and Asp249. The residue at position 106 (Ser106) is a Phosphoserine.

It belongs to the phosphohexose mutase family. Requires Mg(2+) as cofactor. In terms of processing, activated by phosphorylation.

It catalyses the reaction alpha-D-glucosamine 1-phosphate = D-glucosamine 6-phosphate. Functionally, catalyzes the conversion of glucosamine-6-phosphate to glucosamine-1-phosphate. This is Phosphoglucosamine mutase from Cupriavidus metallidurans (strain ATCC 43123 / DSM 2839 / NBRC 102507 / CH34) (Ralstonia metallidurans).